The following is a 433-amino-acid chain: Adenylyltransferase and sulfurtransferase UBA4 (433 aa).

ATP is bound by residues glycine 70, aspartate 91, 98 to 102 (SNLHR), lysine 115, and 159 to 160 (DT). Residues cysteine 201 and cysteine 204 each coordinate Zn(2+). The Glycyl thioester intermediate; for adenylyltransferase activity role is filled by cysteine 218. Positions 279 and 282 each coordinate Zn(2+). The Rhodanese domain occupies 332–431 (SGNNKVLLDV…YIDDVDQSIP (100 aa)). The Cysteine persulfide intermediate; for sulfurtransferase activity role is filled by cysteine 390.

In the N-terminal section; belongs to the HesA/MoeB/ThiF family. UBA4 subfamily. The cofactor is Zn(2+).

It is found in the cytoplasm. The protein localises to the cytosol. Its pathway is tRNA modification; 5-methoxycarbonylmethyl-2-thiouridine-tRNA biosynthesis. Plays a central role in 2-thiolation of mcm(5)S(2)U at tRNA wobble positions of cytosolic tRNA(Lys), tRNA(Glu) and tRNA(Gln). Acts by mediating the C-terminal thiocarboxylation of sulfur carrier URM1. Its N-terminus first activates URM1 as acyl-adenylate (-COAMP), then the persulfide sulfur on the catalytic cysteine is transferred to URM1 to form thiocarboxylation (-COSH) of its C-terminus. The reaction probably involves hydrogen sulfide that is generated from the persulfide intermediate and that acts as a nucleophile towards URM1. Subsequently, a transient disulfide bond is formed. Does not use thiosulfate as sulfur donor; NFS1 probably acting as a sulfur donor for thiocarboxylation reactions. Prior mcm(5) tRNA modification by the elongator complex is required for 2-thiolation. May also be involved in protein urmylation. The protein is Adenylyltransferase and sulfurtransferase UBA4 of Candida glabrata (strain ATCC 2001 / BCRC 20586 / JCM 3761 / NBRC 0622 / NRRL Y-65 / CBS 138) (Yeast).